The primary structure comprises 384 residues: 23S rRNA (uracil(747)-C(5))-methyltransferase RlmC (384 aa).

[4Fe-4S] cluster-binding residues include Cys7, Cys15, Cys18, and Cys94. S-adenosyl-L-methionine contacts are provided by Gln219, Phe248, Glu269, and Asn316. The Nucleophile role is filled by Cys343.

It belongs to the class I-like SAM-binding methyltransferase superfamily. RNA M5U methyltransferase family. RlmC subfamily.

It carries out the reaction uridine(747) in 23S rRNA + S-adenosyl-L-methionine = 5-methyluridine(747) in 23S rRNA + S-adenosyl-L-homocysteine + H(+). Its function is as follows. Catalyzes the formation of 5-methyl-uridine at position 747 (m5U747) in 23S rRNA. This Shewanella sp. (strain MR-4) protein is 23S rRNA (uracil(747)-C(5))-methyltransferase RlmC.